Here is a 32-residue protein sequence, read N- to C-terminus: Periplasmic [NiFe] hydrogenase small subunit (32 aa).

[4Fe-4S] cluster contacts are provided by Cys-17 and Cys-20.

It belongs to the [NiFe]/[NiFeSe] hydrogenase small subunit family. Heterodimer of a large and a small subunit. [3Fe-4S] cluster serves as cofactor. Requires [4Fe-4S] cluster as cofactor.

It localises to the periplasm. The enzyme catalyses 2 Fe(III)-[cytochrome c3] + H2 = 2 Fe(II)-[cytochrome c3] + 2 H(+). The chain is Periplasmic [NiFe] hydrogenase small subunit (hydA) from Desulfovibrio multispirans.